The sequence spans 241 residues: Carboxy-S-adenosyl-L-methionine synthase (241 aa).

S-adenosyl-L-methionine contacts are provided by residues Tyr-38, 63–65, 88–89, 116–117, Asn-131, and Arg-198; these read GCS, DN, and DI.

It belongs to the class I-like SAM-binding methyltransferase superfamily. Cx-SAM synthase family. As to quaternary structure, homodimer.

It catalyses the reaction prephenate + S-adenosyl-L-methionine = carboxy-S-adenosyl-L-methionine + 3-phenylpyruvate + H2O. Functionally, catalyzes the conversion of S-adenosyl-L-methionine (SAM) to carboxy-S-adenosyl-L-methionine (Cx-SAM). In Histophilus somni (strain 2336) (Haemophilus somnus), this protein is Carboxy-S-adenosyl-L-methionine synthase.